A 361-amino-acid polypeptide reads, in one-letter code: Protein RecA (361 aa).

An ATP-binding site is contributed by 68-75; it reads GPESSGKT. Residues 342–361 form a disordered region; sequence PEGAKENISAKDDVAVDTKE. Over residues 344-361 the composition is skewed to basic and acidic residues; it reads GAKENISAKDDVAVDTKE.

This sequence belongs to the RecA family.

It is found in the cytoplasm. Can catalyze the hydrolysis of ATP in the presence of single-stranded DNA, the ATP-dependent uptake of single-stranded DNA by duplex DNA, and the ATP-dependent hybridization of homologous single-stranded DNAs. It interacts with LexA causing its activation and leading to its autocatalytic cleavage. This chain is Protein RecA, found in Clostridium beijerinckii (strain ATCC 51743 / NCIMB 8052) (Clostridium acetobutylicum).